A 175-amino-acid chain; its full sequence is Adenine phosphoribosyltransferase (175 aa).

It belongs to the purine/pyrimidine phosphoribosyltransferase family. As to quaternary structure, homodimer.

It localises to the cytoplasm. The catalysed reaction is AMP + diphosphate = 5-phospho-alpha-D-ribose 1-diphosphate + adenine. Its pathway is purine metabolism; AMP biosynthesis via salvage pathway; AMP from adenine: step 1/1. In terms of biological role, catalyzes a salvage reaction resulting in the formation of AMP, that is energically less costly than de novo synthesis. The chain is Adenine phosphoribosyltransferase from Lactobacillus gasseri (strain ATCC 33323 / DSM 20243 / BCRC 14619 / CIP 102991 / JCM 1131 / KCTC 3163 / NCIMB 11718 / NCTC 13722 / AM63).